The sequence spans 435 residues: 5-methylthioadenosine/S-adenosylhomocysteine deaminase (435 aa).

Zn(2+)-binding residues include H65 and H67. Substrate contacts are provided by E94, R150, and H189. H216 provides a ligand contact to Zn(2+). Residues E219 and D304 each coordinate substrate. D304 contacts Zn(2+).

It belongs to the metallo-dependent hydrolases superfamily. MTA/SAH deaminase family. It depends on Zn(2+) as a cofactor.

It catalyses the reaction S-adenosyl-L-homocysteine + H2O + H(+) = S-inosyl-L-homocysteine + NH4(+). The enzyme catalyses S-methyl-5'-thioadenosine + H2O + H(+) = S-methyl-5'-thioinosine + NH4(+). In terms of biological role, catalyzes the deamination of 5-methylthioadenosine and S-adenosyl-L-homocysteine into 5-methylthioinosine and S-inosyl-L-homocysteine, respectively. Is also able to deaminate adenosine. This Bacillus cereus (strain G9842) protein is 5-methylthioadenosine/S-adenosylhomocysteine deaminase.